A 620-amino-acid chain; its full sequence is Chaperone protein HscA homolog (620 aa).

The protein belongs to the heat shock protein 70 family.

Functionally, chaperone involved in the maturation of iron-sulfur cluster-containing proteins. Has a low intrinsic ATPase activity which is markedly stimulated by HscB. In Shewanella woodyi (strain ATCC 51908 / MS32), this protein is Chaperone protein HscA homolog.